The following is a 368-amino-acid chain: Ankyrin repeat domain-containing protein 40 (368 aa).

Position 1 is an N-acetylmethionine (Met1). ANK repeat units lie at residues 9 to 38 (EQQE…DVNS) and 43 to 72 (NGWT…DKEI). Disordered stretches follow at residues 93 to 115 (MGVE…KKES), 139 to 176 (DSAQ…GTFP), and 196 to 238 (ILRT…NGTY). Residues 95–107 (VEEEDDDDDDDDN) are compositionally biased toward acidic residues. Positions 149–169 (STPPASPPADGSPPLLPPGEP) are enriched in pro residues. The span at 212–224 (PVSQSRSLFSSVP) shows a compositional bias: polar residues.

This is Ankyrin repeat domain-containing protein 40 (ANKRD40) from Homo sapiens (Human).